We begin with the raw amino-acid sequence, 463 residues long: MTTETRSLYSQLPAIDRLLRDSSFLSLRDTYGHTRVVELLRQMLDEAREVIRDSQTLPAWCENWAQEVDARLTKEAQSALRPVINLTGTVLHTNLGRALQAEAAVEAVTKAMRSPVTLEYDLDDAGRGHRDRALAQLLCRITGAEDACIVNNNAAAVLLMLAATASGKEVVVSRGELVEIGGAFRIPDVMRQAGCTLHEVGTTNRTHANDYRQAVNENTALLMKVHTSNYSIQGFTKAIDEAELVALGKELDIPVVTDLGSGSLVDLSQYGLPKEPMPQELIAAGVSLVSFSGDKLLGGPQAGIIVGKKEMIARLQSHPLKRALRADKMTLAALEATLRLYLHPEALSKKLPTLRLLTRSAEVIQIQAQRLQAPLAAHYGAEFAVQVMPCLSQIGSGSLPVDRLPSAALTFTPHDGRGSHLESLAARWRELPVPVIGRIYDGRLWLDLRCLEDEQRFLEMLLK.

At K295 the chain carries N6-(pyridoxal phosphate)lysine.

Belongs to the SelA family. In terms of assembly, homodecamer; pentamer of dimers. Binds only one seryl-tRNA(Sec) per dimer. Requires pyridoxal 5'-phosphate as cofactor.

The protein localises to the cytoplasm. The enzyme catalyses L-seryl-tRNA(Sec) + selenophosphate + H(+) = L-selenocysteinyl-tRNA(Sec) + phosphate. Its pathway is aminoacyl-tRNA biosynthesis; selenocysteinyl-tRNA(Sec) biosynthesis; selenocysteinyl-tRNA(Sec) from L-seryl-tRNA(Sec) (bacterial route): step 1/1. In terms of biological role, converts seryl-tRNA(Sec) to selenocysteinyl-tRNA(Sec) required for selenoprotein biosynthesis. The polypeptide is L-seryl-tRNA(Sec) selenium transferase (Escherichia coli O7:K1 (strain IAI39 / ExPEC)).